The following is a 430-amino-acid chain: RNA polymerase-associated protein LEO1 (430 aa).

A compositionally biased stretch (polar residues) spans 1–10 (MSSSEGNSDA). The disordered stretch occupies residues 1-128 (MSSSEGNSDA…SRGSLNDLQG (128 aa)). The span at 18–30 (KSSTPSSRGSSPD) shows a compositional bias: low complexity. Residues 99–119 (REGKPKESNTRARLSDSDAES) are compositionally biased toward basic and acidic residues. 2 coiled-coil regions span residues 326–347 (TRRENARKEEESLRAHIRRTQM) and 409–429 (EEYRKRKQQQKKQIVTSDEES). Residues 349 to 430 (RNNFKVRGPR…QIVTSDEESD (82 aa)) form a disordered region.

This sequence belongs to the LEO1 family. In terms of assembly, component of the PAF1 complex which consists of at least cdc-73, ctr-9, leo-1, pafo-1 and rtfo-1.

It localises to the nucleus. It is found in the cytoplasm. Functionally, component of the PAF1 complex which is a multifunctional complex involved in transcription initiation via genetic interactions with TATA-binding proteins, elongation and transcription-coupled histone modification. The chain is RNA polymerase-associated protein LEO1 from Caenorhabditis elegans.